The chain runs to 136 residues: MASVTGTSISMASFKASLAPSRVSNLRSVSLPIKGKSFAPLRMRSARFVVCCAAKPETVEKVCAIVKKQLALPDDSAVTGESKFATLGADSLDTVEIVMGLEEEFGINVEEESAQSIATVQDAADLIEKLIEKKSG.

Residues 1–52 (MASVTGTSISMASFKASLAPSRVSNLRSVSLPIKGKSFAPLRMRSARFVVCC) constitute a chloroplast transit peptide. Residues 56 to 131 (PETVEKVCAI…DAADLIEKLI (76 aa)) form the Carrier domain. The residue at position 91 (S91) is an O-(pantetheine 4'-phosphoryl)serine.

The protein belongs to the acyl carrier protein (ACP) family. Post-translationally, 4'-phosphopantetheine is transferred from CoA to a specific serine of apo-ACP by acpS. This modification is essential for activity because fatty acids are bound in thioester linkage to the sulfhydryl of the prosthetic group.

It is found in the plastid. It localises to the chloroplast. The protein operates within lipid metabolism; fatty acid biosynthesis. Functionally, carrier of the growing fatty acid chain in fatty acid biosynthesis. This chain is Acyl carrier protein 1, chloroplastic (ACP1), found in Casuarina glauca (Swamp oak).